The primary structure comprises 43 residues: Protein PsbN (43 aa).

Residues 5–27 (TLVAISISGSLVSFTGYALYTAF) form a helical membrane-spanning segment.

The protein belongs to the PsbN family.

Its subcellular location is the plastid. The protein localises to the chloroplast thylakoid membrane. May play a role in photosystem I and II biogenesis. The protein is Protein PsbN of Lactoris fernandeziana.